A 153-amino-acid chain; its full sequence is Large ribosomal subunit protein uL23m (153 aa).

The disordered stretch occupies residues 110 to 153; that stretch reads IFPEKDKKSKEGSVEEMHEKFMEDERQRQKPDPRRGGVTEWFGL. Residues 111–146 show a composition bias toward basic and acidic residues; that stretch reads FPEKDKKSKEGSVEEMHEKFMEDERQRQKPDPRRGG.

The protein belongs to the universal ribosomal protein uL23 family. Component of the mitochondrial ribosome large subunit (39S) which comprises a 16S rRNA and about 50 distinct proteins.

The protein localises to the mitochondrion. The chain is Large ribosomal subunit protein uL23m (mrpl23) from Danio rerio (Zebrafish).